Consider the following 197-residue polypeptide: FMN-dependent NADH:quinone oxidoreductase (197 aa).

FMN-binding positions include Ser10 and Ser17–Ser19.

Belongs to the azoreductase type 1 family. As to quaternary structure, homodimer. FMN serves as cofactor.

The enzyme catalyses 2 a quinone + NADH + H(+) = 2 a 1,4-benzosemiquinone + NAD(+). The catalysed reaction is N,N-dimethyl-1,4-phenylenediamine + anthranilate + 2 NAD(+) = 2-(4-dimethylaminophenyl)diazenylbenzoate + 2 NADH + 2 H(+). Functionally, quinone reductase that provides resistance to thiol-specific stress caused by electrophilic quinones. Also exhibits azoreductase activity. Catalyzes the reductive cleavage of the azo bond in aromatic azo compounds to the corresponding amines. The chain is FMN-dependent NADH:quinone oxidoreductase from Mycoplasmoides gallisepticum (strain R(low / passage 15 / clone 2)) (Mycoplasma gallisepticum).